Reading from the N-terminus, the 330-residue chain is GTPase Obg (330 aa).

Residues 1 to 159 (MHFIDEVKIY…MWIHLSLKLL (159 aa)) form the Obg domain. The region spanning 160–327 (SDVGLVGLPN…IVKLALETIK (168 aa)) is the OBG-type G domain. GTP-binding positions include 166-173 (GLPNAGKS), 191-195 (FTTLV), 212-215 (DIPG), 279-282 (NKCD), and 308-310 (STC). Mg(2+) is bound by residues Ser-173 and Thr-193.

The protein belongs to the TRAFAC class OBG-HflX-like GTPase superfamily. OBG GTPase family. Monomer. The cofactor is Mg(2+).

Its subcellular location is the cytoplasm. Functionally, an essential GTPase which binds GTP, GDP and possibly (p)ppGpp with moderate affinity, with high nucleotide exchange rates and a fairly low GTP hydrolysis rate. Plays a role in control of the cell cycle, stress response, ribosome biogenesis and in those bacteria that undergo differentiation, in morphogenesis control. This is GTPase Obg from Rickettsia rickettsii (strain Iowa).